Consider the following 972-residue polypeptide: UPF0746 protein DDB_G0280785 (972 aa).

The segment covering methionine 1–aspartate 19 has biased composition (basic and acidic residues). The segment at methionine 1–asparagine 30 is disordered. The region spanning serine 44–phenylalanine 78 is the SAP domain.

Belongs to the UPF0746 family.

This chain is UPF0746 protein DDB_G0280785, found in Dictyostelium discoideum (Social amoeba).